Consider the following 97-residue polypeptide: Small ribosomal subunit protein bS20 (97 aa).

Belongs to the bacterial ribosomal protein bS20 family.

Its function is as follows. Binds directly to 16S ribosomal RNA. This is Small ribosomal subunit protein bS20 from Synechocystis sp. (strain ATCC 27184 / PCC 6803 / Kazusa).